A 139-amino-acid chain; its full sequence is Protein archease (139 aa).

Ca(2+)-binding residues include aspartate 12, aspartate 138, and isoleucine 139.

Belongs to the archease family.

In terms of biological role, activates the tRNA-splicing ligase complex by facilitating the enzymatic turnover of catalytic subunit RtcB. Acts by promoting the guanylylation of RtcB, a key intermediate step in tRNA ligation. Can also alter the NTP specificity of RtcB such that ATP, dGTP or ITP is used efficiently. This chain is Protein archease, found in Saccharolobus islandicus (strain Y.N.15.51 / Yellowstone #2) (Sulfolobus islandicus).